Here is a 470-residue protein sequence, read N- to C-terminus: Argininosuccinate lyase (470 aa).

Belongs to the lyase 1 family. Argininosuccinate lyase subfamily.

The protein resides in the cytoplasm. It carries out the reaction 2-(N(omega)-L-arginino)succinate = fumarate + L-arginine. It participates in amino-acid biosynthesis; L-arginine biosynthesis; L-arginine from L-ornithine and carbamoyl phosphate: step 3/3. The protein is Argininosuccinate lyase of Leptospira interrogans serogroup Icterohaemorrhagiae serovar copenhageni (strain Fiocruz L1-130).